Consider the following 651-residue polypeptide: Acetyl-coenzyme A synthetase (651 aa).

Residues arginine 190–arginine 193, threonine 309, and asparagine 333 contribute to the CoA site. ATP is bound by residues glycine 385 to proline 387, aspartate 409 to threonine 414, aspartate 498, and arginine 513. Serine 521 contacts CoA. Arginine 524 provides a ligand contact to ATP. Residues valine 535, histidine 537, and valine 540 each coordinate Mg(2+). Arginine 582 contacts CoA. Lysine 607 is modified (N6-acetyllysine).

It belongs to the ATP-dependent AMP-binding enzyme family. The cofactor is Mg(2+). In terms of processing, acetylated. Deacetylation by the SIR2-homolog deacetylase activates the enzyme.

The enzyme catalyses acetate + ATP + CoA = acetyl-CoA + AMP + diphosphate. Functionally, catalyzes the conversion of acetate into acetyl-CoA (AcCoA), an essential intermediate at the junction of anabolic and catabolic pathways. AcsA undergoes a two-step reaction. In the first half reaction, AcsA combines acetate with ATP to form acetyl-adenylate (AcAMP) intermediate. In the second half reaction, it can then transfer the acetyl group from AcAMP to the sulfhydryl group of CoA, forming the product AcCoA. The chain is Acetyl-coenzyme A synthetase from Xanthobacter autotrophicus (strain ATCC BAA-1158 / Py2).